The primary structure comprises 374 residues: tRNA-specific 2-thiouridylase MnmA (374 aa).

ATP-binding positions include 17–24 and Met43; that span reads GMSGGVDS. Positions 103–105 are interaction with target base in tRNA; it reads NPD. Cys108 serves as the catalytic Nucleophile. Cys108 and Cys204 are oxidised to a cystine. Gly132 provides a ligand contact to ATP. Positions 154 to 156 are interaction with tRNA; that stretch reads KDQ. The active-site Cysteine persulfide intermediate is Cys204. Positions 316-317 are interaction with tRNA; sequence RY.

Belongs to the MnmA/TRMU family.

It is found in the cytoplasm. The catalysed reaction is S-sulfanyl-L-cysteinyl-[protein] + uridine(34) in tRNA + AH2 + ATP = 2-thiouridine(34) in tRNA + L-cysteinyl-[protein] + A + AMP + diphosphate + H(+). Functionally, catalyzes the 2-thiolation of uridine at the wobble position (U34) of tRNA, leading to the formation of s(2)U34. The chain is tRNA-specific 2-thiouridylase MnmA from Pseudomonas putida (strain W619).